The chain runs to 348 residues: Putative [LysW]-L-2-aminoadipate/[LysW]-L-glutamate phosphate reductase (348 aa).

9–12 (SGYV) contacts NADP(+). The active site involves Cys149. Position 315 (Asn315) interacts with NADP(+).

This sequence belongs to the NAGSA dehydrogenase family. Type 1 subfamily. LysY sub-subfamily.

The protein localises to the cytoplasm. It catalyses the reaction [amino-group carrier protein]-C-terminal-N-(1-carboxy-5-oxopentan-1-yl)-L-glutamine + phosphate + NADP(+) = [amino-group carrier protein]-C-terminal-N-(1-carboxy-5-phosphooxy-5-oxopentan-1-yl)-L-glutamine + NADPH + H(+). It carries out the reaction [amino-group carrier protein]-C-terminal-gamma-(L-glutamyl-5-semialdehyde)-L-glutamate + phosphate + NADP(+) = [amino-group carrier protein]-C-terminal-gamma-(5-phospho-L-glutamyl)-L-glutamate + NADPH + H(+). It functions in the pathway amino-acid biosynthesis; L-lysine biosynthesis via AAA pathway; L-lysine from L-alpha-aminoadipate (Thermus route): step 3/5. Its pathway is amino-acid biosynthesis; L-arginine biosynthesis. Functionally, involved in both the arginine and lysine biosynthetic pathways. This Nitrosopumilus maritimus (strain SCM1) protein is Putative [LysW]-L-2-aminoadipate/[LysW]-L-glutamate phosphate reductase.